The sequence spans 155 residues: MTVNPDAPALPTLPLAVETIQGLLPHRYPFALVDRIIDYVPGERAVGIKNVTFNEPQFQGHFPGRPLMPGVLIVEAMAQVGGVIVTLMPDMPQGLFVFAGIDQVRFRRPVVPGDQLVLSAQLLSAKRRRFCKIQGEAMVDGQLAASGELVFSLVE.

The active site involves H61.

This sequence belongs to the thioester dehydratase family. FabZ subfamily.

The protein resides in the cytoplasm. The catalysed reaction is a (3R)-hydroxyacyl-[ACP] = a (2E)-enoyl-[ACP] + H2O. Functionally, involved in unsaturated fatty acids biosynthesis. Catalyzes the dehydration of short chain beta-hydroxyacyl-ACPs and long chain saturated and unsaturated beta-hydroxyacyl-ACPs. This is 3-hydroxyacyl-[acyl-carrier-protein] dehydratase FabZ from Synechococcus sp. (strain ATCC 27144 / PCC 6301 / SAUG 1402/1) (Anacystis nidulans).